Here is a 330-residue protein sequence, read N- to C-terminus: Complement factor H-related protein 3 (330 aa).

Positions 1–18 (MLLLINVILTLWVSCANG) are cleaved as a signal peptide. Sushi domains follow at residues 22 to 84 (PCDF…VPCL), 85 to 142 (RKCY…RCIR), 144 to 205 (RTCS…ICIN), 208 to 266 (EKCG…RCIH), and 267 to 330 (PCII…PRCE). Intrachain disulfides connect C23–C72, C55–C83, C87–C129, C114–C140, C146–C192, and C175–C203. N-linked (GlcNAc...) asparagine glycosylation occurs at N108. Residues N185 and N205 are each glycosylated (N-linked (GlcNAc...) asparagine). Disulfide bonds link C210–C253, C239–C264, C268–C319, and C302–C329. Residue N309 is glycosylated (N-linked (GlcNAc...) asparagine).

In terms of tissue distribution, expressed by the liver and secreted in plasma.

It localises to the secreted. In terms of biological role, might be involved in complement regulation. The protein is Complement factor H-related protein 3 (CFHR3) of Homo sapiens (Human).